We begin with the raw amino-acid sequence, 646 residues long: Threonine--tRNA ligase (646 aa).

The 61-residue stretch at 1-61 folds into the TGS domain; that stretch reads MIKITFPDGS…NEDASVVLYK (61 aa). The catalytic stretch occupies residues 242-541; the sequence is DHRKIGKEMQ…LIEHTAGKFP (300 aa). Zn(2+)-binding residues include Cys337, His388, and His518.

It belongs to the class-II aminoacyl-tRNA synthetase family. As to quaternary structure, homodimer. It depends on Zn(2+) as a cofactor.

Its subcellular location is the cytoplasm. It catalyses the reaction tRNA(Thr) + L-threonine + ATP = L-threonyl-tRNA(Thr) + AMP + diphosphate + H(+). Functionally, catalyzes the attachment of threonine to tRNA(Thr) in a two-step reaction: L-threonine is first activated by ATP to form Thr-AMP and then transferred to the acceptor end of tRNA(Thr). Also edits incorrectly charged L-seryl-tRNA(Thr). In Bacteroides fragilis (strain YCH46), this protein is Threonine--tRNA ligase.